Here is a 463-residue protein sequence, read N- to C-terminus: Chromogranin-A (463 aa).

The N-terminal stretch at 1–18 (MRSTAVLALLLCAGQVFA) is a signal peptide. Cysteine 35 and cysteine 56 are oxidised to a cystine. The interval 88 to 440 (KERAQQPLKQ…ANRRAEDQEL (353 aa)) is disordered. Low complexity predominate over residues 92–116 (QQPLKQQQPPKQQQQQQQQQQQEQQ). Serine 119 is modified (phosphoserine). The span at 134-160 (DAKHRDAAAEVPSRDTMEKRKDSDKGQ) shows a compositional bias: basic and acidic residues. Residues 196 to 208 (TATNTQSPTSLPS) show a composition bias toward polar residues. A phosphoserine mark is found at serine 220, serine 282, and serine 308. Positions 301–310 (GKGELEHSQQ) are enriched in basic and acidic residues. Glycine 329 is modified (glycine amide). Basic and acidic residues-rich tracts occupy residues 331–340 (KGRELEHKQE) and 348–375 (RLSR…KRLE). Residues serine 350 and serine 383 each carry the phosphoserine modification. Methionine 384 carries the methionine sulfoxide modification. Residues 409-437 (SSREDSVEARSDFEEKKEEEGSANRRAED) are compositionally biased toward basic and acidic residues. 3 positions are modified to phosphoserine: serine 410, serine 414, and serine 430. Serine 430 carries O-linked (Xyl...) (chondroitin sulfate) serine glycosylation. Pyrrolidone carboxylic acid is present on glutamine 438. Serine 444 is subject to Phosphoserine.

This sequence belongs to the chromogranin/secretogranin protein family. Self-interacts; self-assembly is promoted in vitro by chondroitin sulfate attachment which occurs at mildly acidic pH conditions. Interacts with SCG3; this interaction is optimal in conditions mimicking the lumenal milieu of the trans-Golgi network, i.e. pH 5.5 and 10 mM Ca(+2). Interacts with ITPR1 in the secretory granules. Post-translationally, O-glycosylated; contains chondroitin sulfate (CS). CS attachment is pH-dependent, being observed at mildly acidic conditions of pH 5 but not at neutral pH, and promotes self-assembly in vitro.

The protein resides in the cytoplasmic vesicle. It is found in the secretory vesicle. It localises to the neuronal dense core vesicle. The protein localises to the secreted. Its function is as follows. Strongly inhibits glucose induced insulin release from the pancreas. Functionally, inhibits catecholamine release from chromaffin cells and noradrenergic neurons by acting as a non-competitive nicotinic cholinergic antagonist. Can induce mast cell migration, degranulation and production of cytokines and chemokines. In terms of biological role, regulates granule biogenesis in endocrine cells by up-regulating the transcription of protease nexin 1 (SERPINE2) via a cAMP-PKA-SP1 pathway. This leads to inhibition of granule protein degradation in the Golgi complex which in turn promotes granule formation. Pyroglutaminated (pGlu)-serpinin exerts an antiapoptotic effect on cells exposed to oxidative stress. This Mus musculus (Mouse) protein is Chromogranin-A (Chga).